The chain runs to 223 residues: Glutathione S-transferase alpha I (223 aa).

Residue Met1 is modified to N-acetylmethionine. Ala2 carries the N-acetylalanine; in Glutathione S-transferase alpha I, N-terminally processed modification. The GST N-terminal domain maps to 3–83 (RKPLLHYFNG…YVANKHNLYG (81 aa)). Lys4 is modified (N6-succinyllysine). Residues Tyr9, Arg45, 54 to 55 (QV), and 67 to 68 (QT) each bind glutathione. One can recognise a GST C-terminal domain in the interval 85-208 (DMKERALIDM…QPGSQRKPPM (124 aa)).

Belongs to the GST superfamily. Alpha family. In terms of assembly, homodimer or heterodimer of GSTA1 and GSTA2. In terms of tissue distribution, liver and lung.

It is found in the cytoplasm. The enzyme catalyses RX + glutathione = an S-substituted glutathione + a halide anion + H(+). It carries out the reaction prostaglandin A2 + glutathione = prostaglandin A2-S-(R)-glutathione. It catalyses the reaction prostaglandin J2 + glutathione = prostaglandin J2-S-(R)-glutathione. The catalysed reaction is (13S)-hydroperoxy-(9Z,11E)-octadecadienoate + 2 glutathione = (13S)-hydroxy-(9Z,11E)-octadecadienoate + glutathione disulfide + H2O. The enzyme catalyses androst-5-ene-3,17-dione = androst-4-ene-3,17-dione. In terms of biological role, glutathione S-transferase that catalyzes the nucleophilic attack of the sulfur atom of glutathione on the electrophilic groups of a wide range of exogenous and endogenous compounds. Involved in the formation of glutathione conjugates of both prostaglandin A2 (PGA2) and prostaglandin J2 (PGJ2). It also catalyzes the isomerization of D5-androstene-3,17-dione (AD) into D4-androstene-3,17-dione and may therefore play an important role in hormone biosynthesis. Through its glutathione-dependent peroxidase activity toward the fatty acid hydroperoxide (13S)-hydroperoxy-(9Z,11E)-octadecadienoate/13-HPODE it is also involved in the metabolism of oxidized linoleic acid. This chain is Glutathione S-transferase alpha I, found in Oryctolagus cuniculus (Rabbit).